The chain runs to 1147 residues: Nucleolar protein 8 (1147 aa).

The region spanning K8 to E89 is the RRM domain. K225 participates in a covalent cross-link: Glycyl lysine isopeptide (Lys-Gly) (interchain with G-Cter in SUMO2). S300 and S306 each carry phosphoserine. K316 is covalently cross-linked (Glycyl lysine isopeptide (Lys-Gly) (interchain with G-Cter in SUMO2)). Y362 carries the post-translational modification Phosphotyrosine. Residues S364 and S365 each carry the phosphoserine modification. T367 is subject to Phosphothreonine. The tract at residues K379 to K401 is disordered. The span at S383 to Q400 shows a compositional bias: polar residues. S416 is modified (phosphoserine). 7 disordered regions span residues K427–K452, A472–N511, M592–A659, K686–Q741, A766–E888, K932–L963, and S986–C1017. A compositionally biased stretch (acidic residues) spans D441–E450. 2 stretches are compositionally biased toward polar residues: residues M592–Q610 and T629–P650. Basic and acidic residues-rich tracts occupy residues S700–Q714 and A732–Q741. S704 bears the Phosphoserine mark. T777 bears the Phosphothreonine mark. Phosphoserine is present on residues S783 and S787. Residues C799–V809 show a composition bias toward basic and acidic residues. A phosphoserine mark is found at S819, S820, S825, S827, and S872. Positions S857–K883 are enriched in basic and acidic residues. Coiled coils occupy residues L868 to N898 and I937 to L963. Basic and acidic residues predominate over residues D994–N1011. A Glycyl lysine isopeptide (Lys-Gly) (interchain with G-Cter in SUMO2) cross-link involves residue K1038. The tract at residues P1055–P1086 is disordered. 4 positions are modified to phosphoserine: S1063, S1064, S1065, and S1080.

As to quaternary structure, interacts with the GTP form of RRAGA, RRAGC and RRAGD. Interacts with NIP7. Interacts with DDX18; the interaction is RNA-dependent. Interacts with DDX47; the interaction is RNA-dependent. Post-translationally, phosphorylated.

It is found in the nucleus. The protein resides in the nucleolus. Functionally, plays an essential role in the survival of diffuse-type gastric cancer cells. Acts as a nucleolar anchoring protein for DDX47. May be involved in regulation of gene expression at the post-transcriptional level or in ribosome biogenesis in cancer cells. The chain is Nucleolar protein 8 from Mus musculus (Mouse).